The sequence spans 430 residues: C4-dicarboxylate transport protein (430 aa).

8 consecutive transmembrane segments (helical) span residues 9–29 (VLYV…HFYP), 45–65 (LIKM…IAGM), 79–99 (LLYF…ATHL), 149–169 (GEIL…AHLG), 185–205 (VLFG…FGAM), 223–243 (LIGT…GAIA), 308–328 (IYMT…LTWM), and 356–376 (AATL…ILGI).

This sequence belongs to the dicarboxylate/amino acid:cation symporter (DAACS) (TC 2.A.23) family.

It localises to the cell inner membrane. In terms of biological role, responsible for the transport of dicarboxylates such as succinate, fumarate, and malate from the periplasm across the membrane. The polypeptide is C4-dicarboxylate transport protein (Burkholderia orbicola (strain MC0-3)).